Consider the following 347-residue polypeptide: tRNA N6-adenosine threonylcarbamoyltransferase (347 aa).

2 residues coordinate Fe cation: H115 and H119. Residues L137–G141, D170, G183, and N281 contribute to the substrate site. A Fe cation-binding site is contributed by D309.

This sequence belongs to the KAE1 / TsaD family. Requires Fe(2+) as cofactor.

Its subcellular location is the cytoplasm. The catalysed reaction is L-threonylcarbamoyladenylate + adenosine(37) in tRNA = N(6)-L-threonylcarbamoyladenosine(37) in tRNA + AMP + H(+). Functionally, required for the formation of a threonylcarbamoyl group on adenosine at position 37 (t(6)A37) in tRNAs that read codons beginning with adenine. Is involved in the transfer of the threonylcarbamoyl moiety of threonylcarbamoyl-AMP (TC-AMP) to the N6 group of A37, together with TsaE and TsaB. TsaD likely plays a direct catalytic role in this reaction. This chain is tRNA N6-adenosine threonylcarbamoyltransferase, found in Methylorubrum populi (strain ATCC BAA-705 / NCIMB 13946 / BJ001) (Methylobacterium populi).